Reading from the N-terminus, the 363-residue chain is 3-isopropylmalate dehydrogenase (363 aa).

Residue 78-91 coordinates NAD(+); that stretch reads GKKWDYLPIESRPE. R99, R109, R138, and D227 together coordinate substrate. Mg(2+) is bound by residues D227, D251, and D255. 285–297 is an NAD(+) binding site; sequence GSAPDIEGKNIAN.

Belongs to the isocitrate and isopropylmalate dehydrogenases family. LeuB type 1 subfamily. In terms of assembly, homodimer. It depends on Mg(2+) as a cofactor. Requires Mn(2+) as cofactor.

It localises to the cytoplasm. It carries out the reaction (2R,3S)-3-isopropylmalate + NAD(+) = 4-methyl-2-oxopentanoate + CO2 + NADH. It functions in the pathway amino-acid biosynthesis; L-leucine biosynthesis; L-leucine from 3-methyl-2-oxobutanoate: step 3/4. Its function is as follows. Catalyzes the oxidation of 3-carboxy-2-hydroxy-4-methylpentanoate (3-isopropylmalate) to 3-carboxy-4-methyl-2-oxopentanoate. The product decarboxylates to 4-methyl-2 oxopentanoate. In Buchnera aphidicola subsp. Schizaphis graminum (strain Sg), this protein is 3-isopropylmalate dehydrogenase.